A 354-amino-acid chain; its full sequence is 3-dehydroquinate synthase (354 aa).

Residues 66 to 71, 100 to 104, 124 to 125, K136, K145, and 163 to 166 each bind NAD(+); these read SGETSK, GATGD, TT, and FLET. Residues E178, H242, and H256 each contribute to the Zn(2+) site.

Belongs to the sugar phosphate cyclases superfamily. Dehydroquinate synthase family. Requires NAD(+) as cofactor. The cofactor is Co(2+). It depends on Zn(2+) as a cofactor.

It localises to the cytoplasm. It catalyses the reaction 7-phospho-2-dehydro-3-deoxy-D-arabino-heptonate = 3-dehydroquinate + phosphate. It functions in the pathway metabolic intermediate biosynthesis; chorismate biosynthesis; chorismate from D-erythrose 4-phosphate and phosphoenolpyruvate: step 2/7. Functionally, catalyzes the conversion of 3-deoxy-D-arabino-heptulosonate 7-phosphate (DAHP) to dehydroquinate (DHQ). In Staphylococcus epidermidis (strain ATCC 35984 / DSM 28319 / BCRC 17069 / CCUG 31568 / BM 3577 / RP62A), this protein is 3-dehydroquinate synthase.